Reading from the N-terminus, the 469-residue chain is Carboxypeptidase Q (469 aa).

The signal sequence occupies residues 1–19; the sequence is MKTLILTLLSLYELQLCCG. Positions 20 to 42 are excised as a propeptide; the sequence is AYNQNIRSQRKFEMIKTEISSYK. N-linked (GlcNAc...) asparagine glycans are attached at residues N59 and N159. Positions 288 and 300 each coordinate Zn(2+). E334 acts as the Nucleophile in catalysis. E335 contacts Zn(2+). The N-linked (GlcNAc...) asparagine glycan is linked to N351. D362 contacts Zn(2+). N394 carries an N-linked (GlcNAc...) asparagine glycan. H432 serves as a coordination point for Zn(2+).

The protein belongs to the peptidase M28 family. As to quaternary structure, homodimer. The monomeric form is inactive while the homodimer is active.

The protein resides in the endoplasmic reticulum. The protein localises to the golgi apparatus. It localises to the lysosome. Its subcellular location is the secreted. Functionally, carboxypeptidase that may play an important role in the hydrolysis of circulating peptides. Catalyzes more efficiently the hydrolysis of dipeptides with unsubstituted terminals into amino acids. The chain is Carboxypeptidase Q (cpq) from Xenopus laevis (African clawed frog).